The sequence spans 199 residues: Guanylate kinase (199 aa).

The Guanylate kinase-like domain maps to 20-198; it reads GKLIILTGPS…ALQAIEVALF (179 aa). 27-34 is a binding site for ATP; it reads GPSGVGKG.

It belongs to the guanylate kinase family.

It is found in the cytoplasm. It catalyses the reaction GMP + ATP = GDP + ADP. In terms of biological role, essential for recycling GMP and indirectly, cGMP. This Nostoc sp. (strain PCC 7120 / SAG 25.82 / UTEX 2576) protein is Guanylate kinase.